A 214-amino-acid polypeptide reads, in one-letter code: Uridine kinase (214 aa).

15-22 serves as a coordination point for ATP; that stretch reads GASASGKS.

It belongs to the uridine kinase family.

It localises to the cytoplasm. It carries out the reaction uridine + ATP = UMP + ADP + H(+). It catalyses the reaction cytidine + ATP = CMP + ADP + H(+). The protein operates within pyrimidine metabolism; CTP biosynthesis via salvage pathway; CTP from cytidine: step 1/3. It functions in the pathway pyrimidine metabolism; UMP biosynthesis via salvage pathway; UMP from uridine: step 1/1. This Tolumonas auensis (strain DSM 9187 / NBRC 110442 / TA 4) protein is Uridine kinase.